Consider the following 103-residue polypeptide: Large ribosomal subunit protein bL21 (103 aa).

It belongs to the bacterial ribosomal protein bL21 family. As to quaternary structure, part of the 50S ribosomal subunit. Contacts protein L20.

Functionally, this protein binds to 23S rRNA in the presence of protein L20. The polypeptide is Large ribosomal subunit protein bL21 (Bordetella petrii (strain ATCC BAA-461 / DSM 12804 / CCUG 43448)).